A 171-amino-acid chain; its full sequence is Putative lipoprotein LppO (171 aa).

The signal sequence occupies residues 1–28 (MTDPRHTVRIAVGATALGVSALGATLPA). A lipid anchor (N-palmitoyl cysteine) is attached at cysteine 29. Cysteine 29 carries the S-diacylglycerol cysteine lipid modification.

The protein resides in the cell membrane. The polypeptide is Putative lipoprotein LppO (lppO) (Mycobacterium tuberculosis (strain CDC 1551 / Oshkosh)).